A 406-amino-acid polypeptide reads, in one-letter code: RILP-like protein 1 (406 aa).

Serine 7 is subject to Phosphoserine. An RH1 domain is found at 10–97 (AALSALEKNV…RVERMDRIEK (88 aa)). S-nitrosocysteine is present on cysteine 47. Residues 76-258 (ELDELRLELD…KLRERLQGEH (183 aa)) adopt a coiled-coil conformation. Disordered stretches follow at residues 255 to 280 (QGEHSQNGEEEEAEIPPQPDGEESIS) and 330 to 354 (EIEEENRIPQPPPITHPRTSPQPES). Serine 259 bears the Phosphoserine mark. Over residues 262–280 (GEEEEAEIPPQPDGEESIS) the composition is skewed to acidic residues. The 66-residue stretch at 294–359 (RPRFTLQELR…PQPESGIKRL (66 aa)) folds into the RH2 domain.

It belongs to the RILPL family. As to quaternary structure, interacts (when S-nitrosylated) with GAPDH. Interacts with RAB8A; interaction is dependent on the phosphorylation of 'Thr-72' of RAB8A. Interacts with RAB10 and RAB12; the interaction is dependent on the phosphorylation of 'Thr-73' of RAB10, and 'Ser-105' of RAB12. Post-translationally, S-nitrosylation is required for the interaction with GAPDH. As to expression, highly expressed in heart, skeletal muscle, brain and lung (at protein level).

It localises to the cytoplasm. The protein resides in the cytosol. It is found in the cytoskeleton. The protein localises to the microtubule organizing center. Its subcellular location is the centrosome. It localises to the centriole. The protein resides in the cilium basal body. In terms of biological role, plays a role in the regulation of cell shape and polarity. Plays a role in cellular protein transport, including protein transport away from primary cilia. Neuroprotective protein, which acts by sequestring GAPDH in the cytosol and prevent the apoptotic function of GAPDH in the nucleus. Competes with SIAH1 for binding GAPDH. Does not regulate lysosomal morphology and distribution. Binds to RAB10 following LRRK2-mediated RAB10 phosphorylation which leads to inhibition of ciliogenesis. The protein is RILP-like protein 1 (Rilpl1) of Rattus norvegicus (Rat).